The sequence spans 376 residues: Chanoclavine-I aldehyde reductase easA (376 aa).

FMN is bound by residues 29 to 31 (PTT), Ala-64, Gln-106, and His-173. Residues His-173 and Asn-176 each contribute to the substrate site. Tyr-178 serves as the catalytic Proton donor. Residues Lys-225, Gly-297, 323–324 (GR), and Arg-324 contribute to the FMN site. A substrate-binding site is contributed by Tyr-351.

The protein belongs to the NADH:flavin oxidoreductase/NADH oxidase family. FMN serves as cofactor.

It carries out the reaction dihydrochanoclavine-I aldehyde + NADP(+) = chanoclavine-I aldehyde + NADPH + H(+). It participates in alkaloid biosynthesis; ergot alkaloid biosynthesis. Aldehyde reductase; part of the gene cluster that mediates the biosynthesis of fumiclavanine C, a fungal ergot alkaloid. DmaW catalyzes the first step of ergot alkaloid biosynthesis by condensing dimethylallyl diphosphate (DMAP) and tryptophan to form 4-dimethylallyl-L-tryptophan. The second step is catalyzed by the methyltransferase easF that methylates 4-dimethylallyl-L-tryptophan in the presence of S-adenosyl-L-methionine, resulting in the formation of 4-dimethylallyl-L-abrine. The catalase easC and the FAD-dependent oxidoreductase easE then transform 4-dimethylallyl-L-abrine to chanoclavine-I which is further oxidized by EasD in the presence of NAD(+), resulting in the formation of chanoclavine-I aldehyde. EasA reduces chanoclavine-I aldehyde to dihydrochanoclavine-I aldehyde that spontaneously dehydrates to form 6,8-dimethyl-6,7-didehydroergoline. EasG then catalyzes the reduction of 6,8-dimethyl-6,7-didehydroergoline to form festuclavine. Hydrolysis of festuclavine by easM then leads to the formation of fumigaclavine B which is in turn acetylated by easN to fumigaclavine A. Finally, easL catalyzes the conversion of fumigaclavine A into fumigaclavine C by attaching a dimethylallyl moiety to C-2 of the indole nucleus. This chain is Chanoclavine-I aldehyde reductase easA, found in Aspergillus fumigatus (strain ATCC MYA-4609 / CBS 101355 / FGSC A1100 / Af293) (Neosartorya fumigata).